The primary structure comprises 316 residues: Ribosomal RNA small subunit methyltransferase H (316 aa).

S-adenosyl-L-methionine contacts are provided by residues 35–37 (AGH), D55, F84, D105, and Q112.

It belongs to the methyltransferase superfamily. RsmH family.

It localises to the cytoplasm. The catalysed reaction is cytidine(1402) in 16S rRNA + S-adenosyl-L-methionine = N(4)-methylcytidine(1402) in 16S rRNA + S-adenosyl-L-homocysteine + H(+). Its function is as follows. Specifically methylates the N4 position of cytidine in position 1402 (C1402) of 16S rRNA. This chain is Ribosomal RNA small subunit methyltransferase H, found in Streptococcus pneumoniae (strain ATCC 700669 / Spain 23F-1).